Here is an 88-residue protein sequence, read N- to C-terminus: Putative regulatory protein DvMF_1139 (88 aa).

Belongs to the RemA family.

The chain is Putative regulatory protein DvMF_1139 from Nitratidesulfovibrio vulgaris (strain DSM 19637 / Miyazaki F) (Desulfovibrio vulgaris).